Here is a 99-residue protein sequence, read N- to C-terminus: U2-theraphotoxin-Lsp1a (99 aa).

Residues 1 to 22 form the signal peptide; sequence MNTIQVIIFAVVLVLTVTVGQA. Positions 23-57 are excised as a propeptide; sequence DEDSPEASLLRKLKEAEASLFGQNLEESRNSRQKR. Intrachain disulfides connect C58–C73, C65–C78, and C72–C93.

Belongs to the neurotoxin 14 (magi-1) family. 08 (Ltx-4) subfamily. Expressed by the venom gland.

It localises to the secreted. Insecticidal neurotoxin. The chain is U2-theraphotoxin-Lsp1a from Lasiodora sp. (strain IBSP 8539) (Brazilian salmon pink birdeater).